A 169-amino-acid chain; its full sequence is Peptide deformylase (169 aa).

Residues cysteine 93 and histidine 135 each coordinate Fe cation. Glutamate 136 is a catalytic residue. Histidine 139 is a Fe cation binding site.

Belongs to the polypeptide deformylase family. It depends on Fe(2+) as a cofactor.

The enzyme catalyses N-terminal N-formyl-L-methionyl-[peptide] + H2O = N-terminal L-methionyl-[peptide] + formate. Removes the formyl group from the N-terminal Met of newly synthesized proteins. Requires at least a dipeptide for an efficient rate of reaction. N-terminal L-methionine is a prerequisite for activity but the enzyme has broad specificity at other positions. This is Peptide deformylase from Aquifex aeolicus (strain VF5).